Here is a 314-residue protein sequence, read N- to C-terminus: Thioredoxin reductase aclD (314 aa).

FAD-binding positions include 13–16 (GGPA), 35–40 (DSKSYR), histidine 47, and alanine 112. Cysteines 136 and 139 form a disulfide. Residues aspartate 281 and 288-289 (AA) contribute to the FAD site.

Belongs to the class-II pyridine nucleotide-disulfide oxidoreductase family. Homodimer. Requires FAD as cofactor.

It participates in mycotoxin biosynthesis. Thioredoxin reductase; part of the gene cluster that mediates the biosynthesis of aspirochlorine (or antibiotic A30641), an unusual halogenated spiro compound with distinctive antifungal properties due to selective inhibition of protein biosynthesis, and which is also active against bacteria, viruses, and murine tumor cells. The non-ribosomal peptide synthetase (NRPS) aclP is responsible the formation of the diketopiperazine (DKP) core from the condensation of 2 phenylalanine residues. One Phe residue is tailored into chlorotyrosine by hydroxylation and chlorination, whereas the second Phe undergoes an unprecedented C-C bond cleavage to be converted into glycine. After formation of the DKP, sulfur is incorporated into the DKP by conjugation with glutathione by aclG, followed by its stepwise degradation to the thiol by aclI, aclJ and aclK, and the dithiol oxidation by aclT. In addition, oxygenases (aclB, aclC, aclL and aclO) and O-methyltransferases (aclM and aclU) act as tailoring enzymes to produce the intermediate dechloroaspirochlorine. Ultimately, chlorination of dechloroaspirochlorine by the halogenase aclH is the last step in the aspirochlorine pathway. This chain is Thioredoxin reductase aclD, found in Aspergillus oryzae (strain ATCC 42149 / RIB 40) (Yellow koji mold).